A 698-amino-acid polypeptide reads, in one-letter code: Protein artemis (698 aa).

At T380 the chain carries Phosphothreonine. S385 is modified (phosphoserine). Disordered regions lie at residues 445-485 (ANFV…DPDV), 505-595 (LENL…DSIS), and 620-669 (NGVP…LPKP). Positions 449-461 (DCDESNSDSEGEL) are enriched in acidic residues. Residues 508–521 (LPSSIETGGSQSPK) show a composition bias toward polar residues. The segment covering 538-551 (THISSQNSSQSTHI) has biased composition (low complexity). The span at 552–583 (TDQGSQGWDSQCDTVLLSSQEKSGGDSTSLNK) shows a compositional bias: polar residues. The segment covering 641–655 (TSLTSTQADSQSSSD) has biased composition (low complexity). S650 is subject to Phosphoserine; by ATM.

The protein belongs to the DNA repair metallo-beta-lactamase (DRMBL) family. In terms of assembly, interacts with LIG4; the interaction is direct. Interacts with ATM. Interacts with BRCA1. Interacts with PRKDC. Interacts with TP53BP1. Also exhibits ATM- and phosphorylation-dependent interaction with the MRN complex, composed of MRE11, RAD50, and NBN. Phosphorylation on undefined residues by PRKDC may stimulate endonucleolytic activity on 5' and 3' hairpins and overhangs. PRKDC must remain present, even after phosphorylation, for efficient hairpin opening. Also phosphorylated by ATM in response to ionizing radiation (IR) and by ATR in response to ultraviolet (UV) radiation.

The protein resides in the nucleus. Required for V(D)J recombination, the process by which exons encoding the antigen-binding domains of immunoglobulins and T-cell receptor proteins are assembled from individual V, (D), and J gene segments. V(D)J recombination is initiated by the lymphoid specific RAG endonuclease complex, which generates site specific DNA double strand breaks (DSBs). These DSBs present two types of DNA end structures: hairpin sealed coding ends and phosphorylated blunt signal ends. These ends are independently repaired by the non homologous end joining (NHEJ) pathway to form coding and signal joints respectively. This protein exhibits single-strand specific 5'-3' exonuclease activity in isolation, and acquires endonucleolytic activity on 5' and 3' hairpins and overhangs when in a complex with PRKDC. The latter activity is required specifically for the resolution of closed hairpins prior to the formation of the coding joint. May also be required for the repair of complex DSBs induced by ionizing radiation, which require substantial end-processing prior to religation by NHEJ. In Rattus norvegicus (Rat), this protein is Protein artemis (Dclre1c).